Consider the following 243-residue polypeptide: MAVVTLAELLEAGVHFGHQSRRWNPKMFPYIYAERNGIHIIDLVQTAQLLTQACDFVRTASEQGKSFLFVGTKRQAAAVVAQEAERCGAYYVNQRWLGGILTNWFTIRTRVERLKDLENKEESGYLDQLPKKETAILRRELEKLRKNLDGIKTMKRLPDLVVVVDQKRESTAVQECRKLGIPIVSILDTNCNPELADIPIPANDDAIRSIKLILGKIADSISEGNNGKVSSDQEDTQELQTVQ.

Positions G224–Q243 are disordered.

This sequence belongs to the universal ribosomal protein uS2 family.

It localises to the plastid. It is found in the chloroplast. This chain is Small ribosomal subunit protein uS2c (rps2), found in Rhodomonas salina (Cryptomonas salina).